The following is a 177-amino-acid chain: Early nodulin-like protein 15 (177 aa).

The first 24 residues, 1–24, serve as a signal peptide directing secretion; the sequence is MASSSLLVTIFLCISVFFFSSVNA. In terms of domain architecture, Phytocyanin spans 25-129; that stretch reads NEVTVGGKSG…GQKLRLVVIT (105 aa). A disulfide bond links cysteine 83 and cysteine 117. The N-linked (GlcNAc...) asparagine glycan is linked to asparagine 84. Serine 153 carries the GPI-anchor amidated serine lipid modification. The propeptide at 154 to 177 is removed in mature form; that stretch reads GAAKLAGGFSVVFGLVLGLWAFFF.

The protein belongs to the early nodulin-like (ENODL) family. Mostly expressed in seedlings, siliques and flowers, and, to a lower extent, in roots, stems and seeds, but barely in leaves.

It localises to the cell membrane. May act as a carbohydrate transporter. Required, together with ENODL11, ENODL12, ENODL13, ENODL14 and ENODL15, for male-female communication and pollen tube reception and burst at the synergid cell surface of the female gametophyte. The protein is Early nodulin-like protein 15 of Arabidopsis thaliana (Mouse-ear cress).